The following is a 544-amino-acid chain: Protein RDR1 (544 aa).

A DNA-binding region (zn(2)-C6 fungal-type) is located at residues 14 to 40 (CETCRELKRKCDGNQPCGACVRFEYDC). Residues 50-71 (KRRKTVEQDKEAPLPSPPVHVD) are disordered.

The protein resides in the nucleus. In terms of biological role, may act as a transcriptional repressor of multidrug resistance genes. This chain is Protein RDR1 (RDR1), found in Gibberella zeae (strain ATCC MYA-4620 / CBS 123657 / FGSC 9075 / NRRL 31084 / PH-1) (Wheat head blight fungus).